A 49-amino-acid chain; its full sequence is Large ribosomal subunit protein bL33 (49 aa).

It belongs to the bacterial ribosomal protein bL33 family.

The protein is Large ribosomal subunit protein bL33 of Desulfitobacterium hafniense (strain Y51).